We begin with the raw amino-acid sequence, 225 residues long: UPF0758 protein Shew_3481 (225 aa).

An MPN domain is found at 102 to 224 (ILSDPDLTRD…IVSFAERGWI (123 aa)). Zn(2+) contacts are provided by His173, His175, and Asp186. A JAMM motif motif is present at residues 173-186 (HNHPSGGAEPSHAD).

The protein belongs to the UPF0758 family.

The protein is UPF0758 protein Shew_3481 of Shewanella loihica (strain ATCC BAA-1088 / PV-4).